The chain runs to 270 residues: tRNA pseudouridine synthase A (270 aa).

The Nucleophile role is filled by Asp-55. Residue Tyr-110 participates in substrate binding.

It belongs to the tRNA pseudouridine synthase TruA family.

The catalysed reaction is uridine(38/39/40) in tRNA = pseudouridine(38/39/40) in tRNA. In terms of biological role, formation of pseudouridine at positions 38, 39 and 40 in the anticodon stem and loop of transfer RNAs. This Methanoculleus marisnigri (strain ATCC 35101 / DSM 1498 / JR1) protein is tRNA pseudouridine synthase A.